We begin with the raw amino-acid sequence, 592 residues long: Protein phosphatase EYA1 (592 aa).

Disordered stretches follow at residues 1–95 (MEMQ…RPYP) and 240–320 (MTSS…PDSD). Positions 8–26 (SPHSRLSGSSESPSGPKLG) are enriched in low complexity. Residues 28–63 (SHINSNSMTPNGTEVKTEPMSSSETASTTADGSLNN) are compositionally biased toward polar residues. Composition is skewed to low complexity over residues 64-75 (FSGSAIGSSSFS) and 241-253 (TSSN…PSTN). Polar residues predominate over residues 254 to 287 (ATYQLQEPPSGITSQAVTDPTAEYSTIHSPSTPI). The span at 288 to 303 (KDSDSDRLRRGSDGKS) shows a compositional bias: basic and acidic residues. Aspartate 328 functions as the Nucleophile in the catalytic mechanism. Aspartate 328, aspartate 330, and aspartate 556 together coordinate Mg(2+). Aspartate 330 serves as the catalytic Proton donor.

Belongs to the HAD-like hydrolase superfamily. EYA family. As to quaternary structure, probably interacts with SIX2, SIX4 and SIX5. Interacts with H2AX in response to DNA damage. Interacts with SIX3; promotes EYA1 translocation to the nucleus. Mg(2+) serves as cofactor. Sumoylated with SUMO1. In terms of tissue distribution, in the embryo, highly expressed in kidney with lower levels in brain. Weakly expressed in lung. In the adult, highly expressed in heart and skeletal muscle. Weakly expressed in brain and liver. No expression in eye or kidney.

Its subcellular location is the cytoplasm. The protein localises to the nucleus. It catalyses the reaction O-phospho-L-tyrosyl-[protein] + H2O = L-tyrosyl-[protein] + phosphate. It carries out the reaction O-phospho-L-seryl-[protein] + H2O = L-seryl-[protein] + phosphate. The catalysed reaction is O-phospho-L-threonyl-[protein] + H2O = L-threonyl-[protein] + phosphate. In terms of biological role, functions both as protein phosphatase and as transcriptional coactivator for SIX1, and probably also for SIX2, SIX4 and SIX5. Tyrosine phosphatase that dephosphorylates 'Tyr-142' of histone H2AX (H2AXY142ph) and promotes efficient DNA repair via the recruitment of DNA repair complexes containing MDC1. 'Tyr-142' phosphorylation of histone H2AX plays a central role in DNA repair and acts as a mark that distinguishes between apoptotic and repair responses to genotoxic stress. Its function as histone phosphatase may contribute to its function in transcription regulation during organogenesis. Also has phosphatase activity with proteins phosphorylated on Ser and Thr residues (in vitro). Required for normal embryonic development of the craniofacial and trunk skeleton, kidneys and ears. Together with SIX1, it plays an important role in hypaxial muscle development; in this it is functionally redundant with EYA2. The chain is Protein phosphatase EYA1 (EYA1) from Homo sapiens (Human).